Here is a 249-residue protein sequence, read N- to C-terminus: 5'-nucleotidase SurE (249 aa).

Residues aspartate 8, aspartate 9, serine 39, and asparagine 91 each contribute to the a divalent metal cation site.

It belongs to the SurE nucleotidase family. A divalent metal cation is required as a cofactor.

It localises to the cytoplasm. It carries out the reaction a ribonucleoside 5'-phosphate + H2O = a ribonucleoside + phosphate. Nucleotidase that shows phosphatase activity on nucleoside 5'-monophosphates. This chain is 5'-nucleotidase SurE, found in Pseudomonas entomophila (strain L48).